Here is a 238-residue protein sequence, read N- to C-terminus: 2,3-bisphosphoglycerate-dependent phosphoglycerate mutase (238 aa).

Residues 8-15, 21-22, R60, 86-89, K97, 113-114, and 182-183 contribute to the substrate site; these read RHGQSEWN, TG, ERHY, RR, and GN. Catalysis depends on H9, which acts as the Tele-phosphohistidine intermediate. Residue E86 is the Proton donor/acceptor of the active site.

This sequence belongs to the phosphoglycerate mutase family. BPG-dependent PGAM subfamily. Homodimer.

The catalysed reaction is (2R)-2-phosphoglycerate = (2R)-3-phosphoglycerate. It participates in carbohydrate degradation; glycolysis; pyruvate from D-glyceraldehyde 3-phosphate: step 3/5. Its function is as follows. Catalyzes the interconversion of 2-phosphoglycerate and 3-phosphoglycerate. The protein is 2,3-bisphosphoglycerate-dependent phosphoglycerate mutase of Pelagibacter ubique (strain HTCC1062).